Here is a 642-residue protein sequence, read N- to C-terminus: Rhotekin-2 (642 aa).

The region spanning 30 to 105 is the REM-1 domain; sequence IKRKKIRESM…AQKRTGHQDF (76 aa). The PH domain maps to 306-413; sequence LDMMSGFLSQ…WLDSLWQHIY (108 aa). 2 disordered regions span residues 505–563 and 575–642; these read TVLS…GRPS and LQKS…PKAW. Composition is skewed to basic and acidic residues over residues 597–615 and 632–642; these read PEKR…KEYI and SFREKMNPKAW.

The protein is Rhotekin-2 (rtkn2) of Danio rerio (Zebrafish).